The chain runs to 176 residues: Cystatin-related protein 1 (176 aa).

The first 26 residues, 1–26, serve as a signal peptide directing secretion; the sequence is MCKTLHGTLLLLAIFVLFLNFSHATA. A propeptide spanning residues 27–31 is cleaved from the precursor; that stretch reads KRTRR. N-linked (GlcNAc...) asparagine glycosylation occurs at asparagine 71. 2 cysteine pairs are disulfide-bonded: cysteine 129-cysteine 139 and cysteine 153-cysteine 173.

The protein belongs to the cystatin family. As to expression, prostate and lacrimal gland.

This is Cystatin-related protein 1 (Andpro) from Rattus norvegicus (Rat).